Reading from the N-terminus, the 494-residue chain is 3-octaprenyl-4-hydroxybenzoate carboxy-lyase (494 aa).

Asn-172 provides a ligand contact to Mn(2+). Residues 175–177 (IYR), 189–191 (RWL), and 194–195 (RG) contribute to the prenylated FMN site. Glu-238 lines the Mn(2+) pocket. Catalysis depends on Asp-287, which acts as the Proton donor.

Belongs to the UbiD family. As to quaternary structure, homohexamer. Prenylated FMN serves as cofactor. Mn(2+) is required as a cofactor.

The protein resides in the cell membrane. It carries out the reaction a 4-hydroxy-3-(all-trans-polyprenyl)benzoate + H(+) = a 2-(all-trans-polyprenyl)phenol + CO2. Its pathway is cofactor biosynthesis; ubiquinone biosynthesis. Functionally, catalyzes the decarboxylation of 3-octaprenyl-4-hydroxy benzoate to 2-octaprenylphenol, an intermediate step in ubiquinone biosynthesis. This Escherichia coli O139:H28 (strain E24377A / ETEC) protein is 3-octaprenyl-4-hydroxybenzoate carboxy-lyase.